Consider the following 306-residue polypeptide: Proline-rich transmembrane protein 1 (306 aa).

The tract at residues Met-1 to Gln-142 is disordered. The Cytoplasmic segment spans residues Met-1–Tyr-223. Pro residues predominate over residues Thr-15–Ala-36. Over residues Ser-40 to His-49 the composition is skewed to basic residues. 2 stretches are compositionally biased toward pro residues: residues His-87–Pro-111 and Pro-121–Pro-137. The chain crosses the membrane as a helical span at residues Met-224–Phe-244. The Extracellular portion of the chain corresponds to Lys-245–Ser-275. Residues Leu-276–Ala-296 constitute an intramembrane region (helical). Residues Ala-297–Pro-306 are Extracellular-facing.

It belongs to the CD225/Dispanin family. In terms of assembly, component of the outer core of AMPAR complex. AMPAR complex consists of an inner core made of 4 pore-forming GluA/GRIA proteins (GRIA1, GRIA2, GRIA3 and GRIA4) and 4 major auxiliary subunits arranged in a twofold symmetry. One of the two pairs of distinct binding sites is occupied either by CNIH2, CNIH3 or CACNG2, CACNG3. The other harbors CACNG2, CACNG3, CACNG4, CACNG8 or GSG1L. This inner core of AMPAR complex is complemented by outer core constituents binding directly to the GluA/GRIA proteins at sites distinct from the interaction sites of the inner core constituents. Outer core constituents include at least PRRT1, PRRT2, CKAMP44/SHISA9, FRRS1L and NRN1. The proteins of the inner and outer core serve as a platform for other, more peripherally associated AMPAR constituents. Alone or in combination, these auxiliary subunits control the gating and pharmacology of the AMPAR complex and profoundly impact their biogenesis and protein processing.

It localises to the cell membrane. The protein resides in the synapse. In terms of biological role, required to maintain a pool of extrasynaptic AMPA-regulated glutamate receptors (AMPAR) which is necessary for synapse development and function. Regulates basal AMPAR function and synaptic transmission during development but is dispensable at mature hippocampal synapses. Plays a role in regulating basal phosphorylation levels of glutamate receptor GRIA1 and promotes GRIA1 and GRIA2 cell surface expression. The polypeptide is Proline-rich transmembrane protein 1 (Homo sapiens (Human)).